The chain runs to 242 residues: Triosephosphate isomerase (242 aa).

8 to 10 (NWK) provides a ligand contact to substrate. The active-site Electrophile is His-98. The Proton acceptor role is filled by Glu-167. Substrate contacts are provided by residues Gly-173, Ser-205, and 226–227 (GG).

The protein belongs to the triosephosphate isomerase family. Homodimer.

It is found in the cytoplasm. The enzyme catalyses D-glyceraldehyde 3-phosphate = dihydroxyacetone phosphate. It functions in the pathway carbohydrate biosynthesis; gluconeogenesis. The protein operates within carbohydrate degradation; glycolysis; D-glyceraldehyde 3-phosphate from glycerone phosphate: step 1/1. Involved in the gluconeogenesis. Catalyzes stereospecifically the conversion of dihydroxyacetone phosphate (DHAP) to D-glyceraldehyde-3-phosphate (G3P). The sequence is that of Triosephosphate isomerase from Mesomycoplasma hyopneumoniae (strain 232) (Mycoplasma hyopneumoniae).